A 1207-amino-acid chain; its full sequence is Stress response protein NST1 (1207 aa).

Disordered regions lie at residues 1 to 58, 248 to 284, 398 to 420, 451 to 535, 586 to 735, 1124 to 1148, and 1163 to 1183; these read MGLD…EETH, HNKQ…LPER, LDMS…DTDE, SNKN…DYDS, EQQK…DNLH, APAA…SDPV, and TSTG…GQPS. Residues 7 to 16 show a composition bias toward polar residues; it reads TVVTGQNVQF. Over residues 25–36 the composition is skewed to basic residues; it reads KKSRNKKKKSKP. Residues 252-262 are compositionally biased toward low complexity; sequence RQYSEQQRKQQ. The segment covering 469–507 has biased composition (acidic residues); that stretch reads EDSEYDEDLNYSDSYDDEDSPYDDDVYDDNDAESYDEDD. Basic residues predominate over residues 511 to 523; it reads HKHHHQQHLHHHH. Residues 564–727 adopt a coiled-coil conformation; the sequence is VSYQEKQAER…REEDDKPTEE (164 aa). Residues 586–721 are compositionally biased toward basic and acidic residues; the sequence is EQQKKEKEEK…LEVKKKREED (136 aa). Low complexity predominate over residues 1163–1176; sequence TSTGSTSSATPTGS.

The protein belongs to the NST1 family.

Its subcellular location is the cytoplasm. Its function is as follows. May act as a negative regulator of salt tolerance. The polypeptide is Stress response protein NST1 (NST1) (Eremothecium gossypii (strain ATCC 10895 / CBS 109.51 / FGSC 9923 / NRRL Y-1056) (Yeast)).